Reading from the N-terminus, the 132-residue chain is Small ribosomal subunit protein uS8 (132 aa).

The protein belongs to the universal ribosomal protein uS8 family. As to quaternary structure, part of the 30S ribosomal subunit. Contacts proteins S5 and S12.

One of the primary rRNA binding proteins, it binds directly to 16S rRNA central domain where it helps coordinate assembly of the platform of the 30S subunit. The protein is Small ribosomal subunit protein uS8 of Mycobacterium marinum (strain ATCC BAA-535 / M).